An 80-amino-acid chain; its full sequence is Conotoxin Pu11.1 (80 aa).

The first 19 residues, 1–19, serve as a signal peptide directing secretion; that stretch reads MKLVLAIVLILMLLSLSTG. Residues 20–42 constitute a propeptide that is removed on maturation; the sequence is AEMSDNHASRSATALTDRLLGPK. 4 cysteine pairs are disulfide-bonded: Cys-46-Cys-60, Cys-53-Cys-65, Cys-59-Cys-72, and Cys-64-Cys-79.

This sequence belongs to the conotoxin I3 superfamily. Expressed by the venom duct.

It is found in the secreted. The sequence is that of Conotoxin Pu11.1 from Conus pulicarius (Flea-bitten cone).